We begin with the raw amino-acid sequence, 429 residues long: Enolase (429 aa).

Glutamine 164 lines the (2R)-2-phosphoglycerate pocket. Catalysis depends on glutamate 206, which acts as the Proton donor. Mg(2+) is bound by residues aspartate 243, glutamate 286, and aspartate 313. Residues lysine 338, arginine 367, serine 368, and lysine 389 each coordinate (2R)-2-phosphoglycerate. The Proton acceptor role is filled by lysine 338.

The protein belongs to the enolase family. Requires Mg(2+) as cofactor.

The protein resides in the cytoplasm. It localises to the secreted. The protein localises to the cell surface. The enzyme catalyses (2R)-2-phosphoglycerate = phosphoenolpyruvate + H2O. It participates in carbohydrate degradation; glycolysis; pyruvate from D-glyceraldehyde 3-phosphate: step 4/5. Functionally, catalyzes the reversible conversion of 2-phosphoglycerate (2-PG) into phosphoenolpyruvate (PEP). It is essential for the degradation of carbohydrates via glycolysis. In Thermotoga sp. (strain RQ2), this protein is Enolase.